Reading from the N-terminus, the 76-residue chain is Acyl carrier protein (76 aa).

The region spanning Met1 to Thr75 is the Carrier domain. Position 35 is an O-(pantetheine 4'-phosphoryl)serine (Ser35).

It belongs to the acyl carrier protein (ACP) family. 4'-phosphopantetheine is transferred from CoA to a specific serine of apo-ACP by AcpS. This modification is essential for activity because fatty acids are bound in thioester linkage to the sulfhydryl of the prosthetic group.

The protein localises to the cytoplasm. The protein operates within lipid metabolism; fatty acid biosynthesis. Carrier of the growing fatty acid chain in fatty acid biosynthesis. This chain is Acyl carrier protein, found in Onion yellows phytoplasma (strain OY-M).